Reading from the N-terminus, the 489-residue chain is Mitochondrial distribution and morphology protein 12 (489 aa).

The SMP-LTD domain maps to 1-489 (MSIDLNWEAA…VFPSFWTFLV (489 aa)). The span at 72–82 (ESDSEDEDEGH) shows a compositional bias: acidic residues. Disordered stretches follow at residues 72–97 (ESDS…AAAD), 201–313 (WPDA…MRER), and 394–432 (DINH…QPRR). Positions 231 to 249 (LDTGSPSRPSTANTNPTQL) are enriched in polar residues. 2 stretches are compositionally biased toward low complexity: residues 250–265 (SHGQ…NTSN) and 398–424 (QQRQ…NNPE).

This sequence belongs to the MDM12 family. In terms of assembly, component of the ER-mitochondria encounter structure (ERMES) or MDM complex, composed of MMM1, MDM10, mdm12 and MDM34. An MMM1 homodimer associates with one molecule of mdm12 on each side in a pairwise head-to-tail manner, and the SMP-LTD domains of MMM1 and mdm12 generate a continuous hydrophobic tunnel for phospholipid trafficking.

The protein localises to the mitochondrion outer membrane. Its subcellular location is the endoplasmic reticulum membrane. Its function is as follows. Component of the ERMES/MDM complex, which serves as a molecular tether to connect the endoplasmic reticulum (ER) and mitochondria. Components of this complex are involved in the control of mitochondrial shape and protein biogenesis, and function in nonvesicular lipid trafficking between the ER and mitochondria. mdm12 is required for the interaction of the ER-resident membrane protein MMM1 and the outer mitochondrial membrane-resident beta-barrel protein MDM10. The mdm12-MMM1 subcomplex functions in the major beta-barrel assembly pathway that is responsible for biogenesis of all mitochondrial outer membrane beta-barrel proteins, and acts in a late step after the SAM complex. The MDM10-mdm12-MMM1 subcomplex further acts in the TOM40-specific pathway after the action of the mdm12-MMM1 complex. Essential for establishing and maintaining the structure of mitochondria and maintenance of mtDNA nucleoids. The chain is Mitochondrial distribution and morphology protein 12 from Talaromyces marneffei (strain ATCC 18224 / CBS 334.59 / QM 7333) (Penicillium marneffei).